Reading from the N-terminus, the 66-residue chain is Translational regulator CsrA (66 aa).

It belongs to the CsrA/RsmA family. As to quaternary structure, homodimer; the beta-strands of each monomer intercalate to form a hydrophobic core, while the alpha-helices form wings that extend away from the core.

Its subcellular location is the cytoplasm. In terms of biological role, a key translational regulator that binds mRNA to regulate translation initiation and/or mRNA stability. Mediates global changes in gene expression, shifting from rapid growth to stress survival by linking envelope stress, the stringent response and the catabolite repression systems. Usually binds in the 5'-UTR; binding at or near the Shine-Dalgarno sequence prevents ribosome-binding, repressing translation, binding elsewhere in the 5'-UTR can activate translation and/or stabilize the mRNA. Its function is antagonized by small RNA(s). In Alkalilimnicola ehrlichii (strain ATCC BAA-1101 / DSM 17681 / MLHE-1), this protein is Translational regulator CsrA.